We begin with the raw amino-acid sequence, 800 residues long: DNA topoisomerase 4 subunit A (800 aa).

The Topo IIA-type catalytic domain maps to 31–495 (LPDVRDGLKP…EIEEIKIDKE (465 aa)). Tyrosine 119 acts as the O-(5'-phospho-DNA)-tyrosine intermediate in catalysis.

This sequence belongs to the type II topoisomerase GyrA/ParC subunit family. ParC type 2 subfamily. Heterotetramer composed of ParC and ParE.

The protein localises to the cell membrane. It carries out the reaction ATP-dependent breakage, passage and rejoining of double-stranded DNA.. Its function is as follows. Topoisomerase IV is essential for chromosome segregation. It relaxes supercoiled DNA. Performs the decatenation events required during the replication of a circular DNA molecule. The sequence is that of DNA topoisomerase 4 subunit A from Staphylococcus aureus (strain NCTC 8325 / PS 47).